Here is a 379-residue protein sequence, read N- to C-terminus: Elongation factor Ts, mitochondrial (379 aa).

The transit peptide at 1–33 (MAWGQGAKRSILGLLFRSQHQTARAYSSSAFQT) directs the protein to the mitochondrion.

It belongs to the EF-Ts family.

It localises to the mitochondrion. Its function is as follows. Associates with the EF-Tu.GDP complex and induces the exchange of GDP to GTP. It remains bound to the aminoacyl-tRNA.EF-Tu.GTP complex up to the GTP hydrolysis stage on the ribosome. This Zea mays (Maize) protein is Elongation factor Ts, mitochondrial.